Consider the following 258-residue polypeptide: Glutamate racemase (258 aa).

Substrate-binding positions include 11–12 and 43–44; these read DS and YG. Residue C74 is the Proton donor/acceptor of the active site. Residue 75-76 participates in substrate binding; it reads NT. The active-site Proton donor/acceptor is C187. Residue 188-189 participates in substrate binding; it reads TH.

Belongs to the aspartate/glutamate racemases family.

It carries out the reaction L-glutamate = D-glutamate. It participates in cell wall biogenesis; peptidoglycan biosynthesis. Its function is as follows. Provides the (R)-glutamate required for cell wall biosynthesis. The polypeptide is Glutamate racemase (Bifidobacterium animalis subsp. lactis (strain AD011)).